The sequence spans 129 residues: uncharacterized protein (129 aa).

Residues 1 to 129 (MGRMASPLRS…PARQSARMAR (129 aa)) form a disordered region. Over residues 18-46 (ESTRHKETSTVRVETSSHREETSSHRVET) the composition is skewed to basic and acidic residues. Residues 47–59 (SSRQVRTSSRQVE) show a composition bias toward low complexity. A compositionally biased stretch (polar residues) spans 70–97 (LTPSTKRLPQFLEVSSQHVETSSQCTET).

This is an uncharacterized protein from Mus musculus (Mouse).